The sequence spans 845 residues: Beta-mannosidase B (845 aa).

Residue Asn252 is glycosylated (N-linked (GlcNAc...) asparagine). The Proton donor role is filled by Glu432. Residues Asn717 and Asn723 are each glycosylated (N-linked (GlcNAc...) asparagine).

The protein belongs to the glycosyl hydrolase 2 family. Beta-mannosidase B subfamily.

The enzyme catalyses Hydrolysis of terminal, non-reducing beta-D-mannose residues in beta-D-mannosides.. It participates in glycan metabolism; N-glycan degradation. Exoglycosidase that cleaves the single beta-linked mannose residue from the non-reducing end of beta-mannosidic oligosaccharides of various complexity and length. Prefers mannobiose over mannotriose and has no activity against polymeric mannan. Is also severely restricted by galactosyl substitutions at the +1 subsite. The sequence is that of Beta-mannosidase B (mndB) from Aspergillus fumigatus (strain ATCC MYA-4609 / CBS 101355 / FGSC A1100 / Af293) (Neosartorya fumigata).